Reading from the N-terminus, the 427-residue chain is Trigger factor (427 aa).

Residues 163–248 (GDTVVIDFVG…IHEVKAKEVP (86 aa)) form the PPIase FKBP-type domain.

The protein belongs to the FKBP-type PPIase family. Tig subfamily.

The protein resides in the cytoplasm. The catalysed reaction is [protein]-peptidylproline (omega=180) = [protein]-peptidylproline (omega=0). Functionally, involved in protein export. Acts as a chaperone by maintaining the newly synthesized protein in an open conformation. Functions as a peptidyl-prolyl cis-trans isomerase. In Streptococcus pneumoniae (strain Hungary19A-6), this protein is Trigger factor.